The following is a 1350-amino-acid chain: Probable serine/threonine-protein kinase irlE (1350 aa).

An N-linked (GlcNAc...) asparagine glycan is attached at Asn37. The helical transmembrane segment at 149-169 (FWEILASCYGTISFIKFFNIF) threads the bilayer. A coiled-coil region spans residues 731 to 802 (EAELKEKFEI…NIQQNYENQH (72 aa)). The span at 761–771 (LKKKNKLKKQK) shows a compositional bias: basic residues. 2 disordered regions span residues 761 to 795 (LKKK…QNIQ) and 807 to 864 (RKFN…TTNS). A compositionally biased stretch (low complexity) spans 772–795 (NQQQQQQAKQQAQQQKQQHQQNIQ). Residues 809-823 (FNQQTKGRPISPSSI) are compositionally biased toward polar residues. The span at 824-864 (QNQNLNPTLLQNQNQTSNPTPNLESTKKATPTTTTTTTTNS) shows a compositional bias: low complexity. Residues 903–1166 (KKESNILGRG…LSSVLKHPLF (264 aa)) form the Protein kinase domain. ATP contacts are provided by residues 909-917 (LGRGSNGTL) and Lys932. Asp1034 functions as the Proton acceptor in the catalytic mechanism. The region spanning 1169 to 1346 (SLKKIKFLES…KNSIHFSNDT (178 aa)) is the KEN domain.

Belongs to the protein kinase superfamily. Ser/Thr protein kinase family.

It localises to the membrane. It carries out the reaction L-seryl-[protein] + ATP = O-phospho-L-seryl-[protein] + ADP + H(+). It catalyses the reaction L-threonyl-[protein] + ATP = O-phospho-L-threonyl-[protein] + ADP + H(+). The polypeptide is Probable serine/threonine-protein kinase irlE (irlE) (Dictyostelium discoideum (Social amoeba)).